Consider the following 125-residue polypeptide: Probable growth factor FPV211 (125 aa).

A signal peptide spans 1–48 (MKEPLIEVKREYNLIKTLTGKKFVVSTSIVVVLLIINMIFYGIRIHEL). Residues 80–120 (LFEKCKSKFNNFCIYGECMNIINLDKKFCICNKGYTGNRCD) enclose the EGF-like domain. Intrachain disulfides connect C84/C97, C92/C108, and C110/C119.

The protein localises to the secreted. This is Probable growth factor FPV211 from Vertebrata (FPV).